The chain runs to 372 residues: Spermidine/putrescine import ATP-binding protein PotA (372 aa).

The 231-residue stretch at 11–241 folds into the ABC transporter domain; sequence IELRSIKKSY…PANLFVARFI (231 aa). Residue 43–50 coordinates ATP; the sequence is GPSGCGKT.

Belongs to the ABC transporter superfamily. Spermidine/putrescine importer (TC 3.A.1.11.1) family. In terms of assembly, the complex is composed of two ATP-binding proteins (PotA), two transmembrane proteins (PotB and PotC) and a solute-binding protein (PotD).

The protein localises to the cell inner membrane. The catalysed reaction is ATP + H2O + polyamine-[polyamine-binding protein]Side 1 = ADP + phosphate + polyamineSide 2 + [polyamine-binding protein]Side 1.. In terms of biological role, part of the ABC transporter complex PotABCD involved in spermidine/putrescine import. Responsible for energy coupling to the transport system. The chain is Spermidine/putrescine import ATP-binding protein PotA from Haemophilus influenzae (strain 86-028NP).